The sequence spans 333 residues: Gramillins biosynthetic cluster protein FGSG_00039 (333 aa).

It functions in the pathway mycotoxin biosynthesis. Part of the gene cluster that mediates the biosynthesis of gramillins A and B, bicyclic lipopeptides that induce cell death in maize leaves but not in wheat leaves. The nonribosomal peptide synthetase GRA1 incorporates respectively a glutamic adic (Glu), a leucine (Leu), a serine (Ser), a hydroxyglutamine (HOGln), a 2-amino decanoic acid, and 2 cysteins (CysB and CysA). The biosynthesis of 2-amino decanoic acid incorporated in gramillins could be initiated by a fatty acid synthase composed of the alpha and beta subunits FGSG_00036 and FGSG_11656. The cytochrome P450 monooxygenase FGSG_15680 could hydroxylate the fatty acid chain. Subsequent oxidation to the ketone by the oxidoreductase FGSG_00048 and transamination by aminotransferase FGSG_00049 could form 2-amino-decanoic acid. On the other hand, FGSG_15680 could also be responsible for the HO-modified glutamine at the gamma-position. Whether hydroxylation occurs on the fully assembled product or on the Gln residue prior to assembly into the gramillins requires further proof. The thioredoxin FGSG_00043 could also be required for the disulfide-bond formation between CysA and CysB. The specific involvement of the remaining proteins from the cluster is more difficult to discern, but could have broader regulatory (FGSG_00040 and FGSG_11657) or enzymatic functions (FGSG_00044 and FGSG_00045). The final C-domain of GRA1 does not possess the expected sequence of a termination CT domain, often implicated in macrocyclization and release of a cyclopeptidein fungal NRPs; and the thioesterase FGSG_00047 may act in concert with the terminal C-domain of GRA1 to catalyze the formation of the macrocyclic anhydride and release of the products. In Gibberella zeae (strain ATCC MYA-4620 / CBS 123657 / FGSC 9075 / NRRL 31084 / PH-1) (Wheat head blight fungus), this protein is Gramillins biosynthetic cluster protein FGSG_00039.